Reading from the N-terminus, the 556-residue chain is (6-4)DNA photolyase (556 aa).

The Photolyase/cryptochrome alpha/beta domain maps to 24 to 162; the sequence is SGSLIWFRKG…EVFSPVSHTL (139 aa). Phosphate is bound at residue Glu262. FAD is bound by residues Lys263, 276–280, 317–321, 380–383, Arg386, 415–417, and Asn421; these read TTVMS, QLLWR, WMHH, and DSD. Trp320 contacts DNA. The tract at residues 382 to 387 is interaction with DNA; the sequence is HHLARH. Trp427 is a DNA binding site. The tract at residues 534–556 is disordered; it reads LRRKLQKDEHEESKIRNQRPKLK. The segment covering 539–548 has biased composition (basic and acidic residues); the sequence is QKDEHEESKI.

Belongs to the DNA photolyase class-1 family. It depends on FAD as a cofactor. In terms of tissue distribution, expressed in siliques, flowers and leaves. Not detected in roots.

It catalyses the reaction (6-4) photoproduct (in DNA) = 2 pyrimidine residues (in DNA).. In terms of biological role, involved in repair of UV radiation-induced DNA damage. Catalyzes the photoreactivation of pyrimidine [6-4] pyrimidone photoproduct (6-4 products). Binds specifically to DNA containing 6-4 products and repairs these lesions in a visible light-dependent manner. Not required for repair of cyclobutane pyrimidine dimer (CPD). This Arabidopsis thaliana (Mouse-ear cress) protein is (6-4)DNA photolyase (UVR3).